The primary structure comprises 310 residues: Dehydrodolichyl diphosphate synthase 2 (310 aa).

The protein belongs to the UPP synthase family. The cofactor is Mg(2+).

It functions in the pathway protein modification; protein glycosylation. Catalyzes cis-prenyl chain elongation to produce the polyprenyl backbone of dolichol, a glycosyl carrier-lipid required for the biosynthesis of several classes of glycoprotein. The polypeptide is Dehydrodolichyl diphosphate synthase 2 (Arabidopsis thaliana (Mouse-ear cress)).